Reading from the N-terminus, the 30-residue chain is Cycloviolacin-O2 (30 aa).

The cyclopeptide (Gly-Asn) cross-link spans 1-30 (GIPCGESCVWIPCISSAIGCSCKSKVCYRN). Intrachain disulfides connect C4/C20, C8/C22, and C13/C27.

In terms of processing, this is a cyclic peptide.

In terms of biological role, probably participates in a plant defense mechanism. This Viola biflora (Yellow wood violet) protein is Cycloviolacin-O2.